Reading from the N-terminus, the 252-residue chain is Triosephosphate isomerase (252 aa).

A substrate-binding site is contributed by 10-12 (NWK). H96 (electrophile) is an active-site residue. The Proton acceptor role is filled by E168. Residues G174, S213, and 234–235 (GG) contribute to the substrate site.

The protein belongs to the triosephosphate isomerase family. As to quaternary structure, homodimer.

The protein localises to the cytoplasm. The enzyme catalyses D-glyceraldehyde 3-phosphate = dihydroxyacetone phosphate. The protein operates within carbohydrate biosynthesis; gluconeogenesis. It participates in carbohydrate degradation; glycolysis; D-glyceraldehyde 3-phosphate from glycerone phosphate: step 1/1. Its function is as follows. Involved in the gluconeogenesis. Catalyzes stereospecifically the conversion of dihydroxyacetone phosphate (DHAP) to D-glyceraldehyde-3-phosphate (G3P). The chain is Triosephosphate isomerase from Idiomarina loihiensis (strain ATCC BAA-735 / DSM 15497 / L2-TR).